Here is a 241-residue protein sequence, read N- to C-terminus: ATP synthase subunit a (241 aa).

5 helical membrane-spanning segments follow: residues 30-50 (GQVFLTSWILLGSLLVFISLG), 91-111 (FIGTLFLFVFVSNWGGALIPW), 128-148 (INTTIALALLVSLSYFYAGLS), 193-213 (LVVGVLVFLVPLVLPIPVMFL), and 214-234 (GLFTSAIQALIFATLAAYYIG).

Belongs to the ATPase A chain family. F-type ATPases have 2 components, CF(1) - the catalytic core - and CF(0) - the membrane proton channel. CF(1) has five subunits: alpha(3), beta(3), gamma(1), delta(1), epsilon(1). CF(0) has four main subunits: a, b, b' and c.

Its subcellular location is the cellular thylakoid membrane. Functionally, key component of the proton channel; it plays a direct role in the translocation of protons across the membrane. This Prochlorococcus marinus (strain MIT 9515) protein is ATP synthase subunit a.